A 489-amino-acid polypeptide reads, in one-letter code: Putative general secretion pathway protein A (489 aa).

ATP is bound at residue 26–33 (GEAGSGKT). Residues 237–257 (MQLAVVMSGTIIALTCGWLLL) traverse the membrane as a helical segment.

The protein belongs to the ExeA family.

It is found in the cell membrane. In terms of biological role, may play a regulatory role under conditions of derepressed gsp gene expression. The polypeptide is Putative general secretion pathway protein A (gspA) (Escherichia coli (strain K12)).